The primary structure comprises 354 residues: Neuronal growth regulator 1 (354 aa).

Positions 1–37 are cleaved as a signal peptide; that stretch reads MDMMLLVQGACCSNQWLAAVLLSLCCLLPSCLPAGQS. 3 consecutive Ig-like C2-type domains span residues 38–134, 139–221, and 225–313; these read VDFP…VHLT, PKIY…KVVV, and PTIQ…LPLN. Cysteine 60 and cysteine 118 are oxidised to a cystine. Asparagine 73 and asparagine 155 each carry an N-linked (GlcNAc...) asparagine glycan. Cystine bridges form between cysteine 160-cysteine 203 and cysteine 245-cysteine 297. Tyrosine 187 is modified (phosphotyrosine). Asparagine 275, asparagine 286, asparagine 294, and asparagine 307 each carry an N-linked (GlcNAc...) asparagine glycan. Glycine 324 is lipidated: GPI-anchor amidated glycine. A propeptide spans 325 to 354 (removed in mature form); the sequence is SADVLFSCWYLVLTLSSFTSIFYLKNAILQ.

Belongs to the immunoglobulin superfamily. IgLON family.

It is found in the cell membrane. In terms of biological role, may be involved in cell-adhesion. May function as a trans-neural growth-promoting factor in regenerative axon sprouting in the mammalian brain. The polypeptide is Neuronal growth regulator 1 (NEGR1) (Homo sapiens (Human)).